A 124-amino-acid chain; its full sequence is Small ribosomal subunit protein uS12 (124 aa).

D89 bears the 3-methylthioaspartic acid mark.

Belongs to the universal ribosomal protein uS12 family. In terms of assembly, part of the 30S ribosomal subunit. Contacts proteins S8 and S17. May interact with IF1 in the 30S initiation complex.

Functionally, with S4 and S5 plays an important role in translational accuracy. Interacts with and stabilizes bases of the 16S rRNA that are involved in tRNA selection in the A site and with the mRNA backbone. Located at the interface of the 30S and 50S subunits, it traverses the body of the 30S subunit contacting proteins on the other side and probably holding the rRNA structure together. The combined cluster of proteins S8, S12 and S17 appears to hold together the shoulder and platform of the 30S subunit. The chain is Small ribosomal subunit protein uS12 from Haemophilus ducreyi (strain 35000HP / ATCC 700724).